The chain runs to 444 residues: C4-dicarboxylate transport protein (444 aa).

9 consecutive transmembrane segments (helical) span residues 21-41 (HLYV…HFYP), 57-77 (LVKM…IAGM), 92-112 (IYFL…ANVV), 161-181 (GDIL…ALVG), 201-221 (LVSI…AFTI), 234-254 (LLIG…LGAV), 320-340 (IYMT…LSLS), 345-365 (LLLV…AGFI), and 368-388 (AATL…ILGI).

It belongs to the dicarboxylate/amino acid:cation symporter (DAACS) (TC 2.A.23) family.

It is found in the cell inner membrane. Its function is as follows. Responsible for the transport of dicarboxylates such as succinate, fumarate, and malate from the periplasm across the membrane. This chain is C4-dicarboxylate transport protein, found in Brucella anthropi (strain ATCC 49188 / DSM 6882 / CCUG 24695 / JCM 21032 / LMG 3331 / NBRC 15819 / NCTC 12168 / Alc 37) (Ochrobactrum anthropi).